The primary structure comprises 507 residues: RNA-binding protein MEX3B (507 aa).

Positions 1–22 are disordered; sequence MPSSLFADMERNGSGGGGGETL. KH domains lie at 59 to 120 and 155 to 216; these read MTEC…RREI and QTTI…REEI. Disordered regions lie at residues 256–279 and 426–450; these read NQSS…LGSA and SSSS…GMRR. Positions 426–446 are enriched in low complexity; it reads SSSSSSSSSSSSSSSSSSSSS. The segment at 456–496 adopts an RING-type zinc-finger fold; it reads CSICFESEVIAALVPCGHNLFCMECANRICEKNQPQCPVCH.

The protein resides in the cytoplasm. Its subcellular location is the nucleus. It is found in the cytoplasmic granule. The protein localises to the P-body. In terms of biological role, RNA-binding protein. May be involved in post-transcriptional regulatory mechanisms. This is RNA-binding protein MEX3B (mex3b) from Xenopus laevis (African clawed frog).